Reading from the N-terminus, the 182-residue chain is ATP-dependent protease subunit HslV (182 aa).

The active site involves threonine 12. Positions 167, 170, and 173 each coordinate Na(+).

This sequence belongs to the peptidase T1B family. HslV subfamily. A double ring-shaped homohexamer of HslV is capped on each side by a ring-shaped HslU homohexamer. The assembly of the HslU/HslV complex is dependent on binding of ATP.

The protein resides in the cytoplasm. It catalyses the reaction ATP-dependent cleavage of peptide bonds with broad specificity.. Allosterically activated by HslU binding. Protease subunit of a proteasome-like degradation complex believed to be a general protein degrading machinery. The chain is ATP-dependent protease subunit HslV from Chlorobium phaeobacteroides (strain BS1).